The following is a 321-amino-acid chain: Transcription factor MYB60 (321 aa).

2 HTH myb-type domains span residues 9 to 65 (KVGI…RPGI) and 66 to 116 (KRGN…KKKI). 2 DNA-binding regions (H-T-H motif) span residues 37-61 (WRSVPTNTGLLRCSKSCRLRWTNYL) and 89-112 (WAAIASYLPQRTDNDIKNYWNTHL). S-nitrosocysteine occurs at positions 49 and 53. 2 disordered regions span residues 196–215 (SPKATKEKLHQNSSLEEGSI) and 263–291 (HHQTTDATIPSDDHDHDHEMKMDHDQKKH). Residues 206–215 (QNSSLEEGSI) show a composition bias toward polar residues. Over residues 273–290 (SDDHDHDHEMKMDHDQKK) the composition is skewed to basic and acidic residues.

In terms of tissue distribution, restricted to stomatal guard cells. Mostly expressed in leaves, cotyledons, hypocotyls, seeds and ripened berry skins.

The protein localises to the nucleus. Its function is as follows. Transcription factor involved in the regulation of gene (e.g. drought-regulated and flavonoid biosynthetic genes) expression and stomatal movements leading to negative regulation of responses to drought and responses to other physiological stimuli (e.g. light). The sequence is that of Transcription factor MYB60 from Vitis vinifera (Grape).